A 628-amino-acid chain; its full sequence is Glutamyl-tRNA(Gln) amidotransferase subunit E (628 aa).

The protein belongs to the GatB/GatE family. GatE subfamily. As to quaternary structure, heterodimer of GatD and GatE.

The catalysed reaction is L-glutamyl-tRNA(Gln) + L-glutamine + ATP + H2O = L-glutaminyl-tRNA(Gln) + L-glutamate + ADP + phosphate + H(+). In terms of biological role, allows the formation of correctly charged Gln-tRNA(Gln) through the transamidation of misacylated Glu-tRNA(Gln) in organisms which lack glutaminyl-tRNA synthetase. The reaction takes place in the presence of glutamine and ATP through an activated gamma-phospho-Glu-tRNA(Gln). The GatDE system is specific for glutamate and does not act on aspartate. In Sulfurisphaera tokodaii (strain DSM 16993 / JCM 10545 / NBRC 100140 / 7) (Sulfolobus tokodaii), this protein is Glutamyl-tRNA(Gln) amidotransferase subunit E.